A 121-amino-acid polypeptide reads, in one-letter code: MEAKAQARFVRVTPQKARRVVDTIRGKGAAEAVAVLSFAPQAAAETVRKVVESAVANARVKADTASVRFDPADLVIAEAYVDEGPTLKRFRPRAQGRANQVLKRTSHITVIVAERQKEGAR.

This sequence belongs to the universal ribosomal protein uL22 family. As to quaternary structure, part of the 50S ribosomal subunit.

In terms of biological role, this protein binds specifically to 23S rRNA; its binding is stimulated by other ribosomal proteins, e.g. L4, L17, and L20. It is important during the early stages of 50S assembly. It makes multiple contacts with different domains of the 23S rRNA in the assembled 50S subunit and ribosome. The globular domain of the protein is located near the polypeptide exit tunnel on the outside of the subunit, while an extended beta-hairpin is found that lines the wall of the exit tunnel in the center of the 70S ribosome. The sequence is that of Large ribosomal subunit protein uL22 from Beutenbergia cavernae (strain ATCC BAA-8 / DSM 12333 / CCUG 43141 / JCM 11478 / NBRC 16432 / NCIMB 13614 / HKI 0122).